Here is a 264-residue protein sequence, read N- to C-terminus: 2-dehydro-3-deoxy-D-gluconate 5-dehydrogenase (264 aa).

14–38 (LVTGSTHGLGMAMAKGLGLAGATIV) serves as a coordination point for NAD(+). Ser147 is a binding site for substrate. Tyr160 functions as the Proton acceptor in the catalytic mechanism.

This sequence belongs to the short-chain dehydrogenases/reductases (SDR) family. Homotetramer.

The protein localises to the cytoplasm. The enzyme catalyses 2-dehydro-3-deoxy-D-gluconate + NAD(+) = 3-deoxy-D-glycero-2,5-hexodiulosonate + NADH + H(+). Its function is as follows. 2-dehydro-3-deoxy-D-gluconate 5-dehydrogenase involved in ulvan degradation. Ulvan is the main polysaccharide component of the Ulvales (green seaweed) cell wall. It is composed of disaccharide building blocks comprising 3-sulfated rhamnose (Rha3S) linked to D-glucuronic acid (GlcA), L-iduronic acid (IduA), or D-xylose (Xyl). Catalyzes the reversible reduction of 2,5-diketo-3-deoxygluconate (DKII or 4,6-dihydroxy-2,5-dioxohexanoate) into 2-keto-3-deoxygluconate (KDG or 2-dehydro-3-deoxygluconate) with a concomitant oxidation of NADH. This Formosa agariphila (strain DSM 15362 / KCTC 12365 / LMG 23005 / KMM 3901 / M-2Alg 35-1) protein is 2-dehydro-3-deoxy-D-gluconate 5-dehydrogenase (kduD).